Reading from the N-terminus, the 112-residue chain is Cell cycle protein GpsB (112 aa).

Positions 38 to 72 (IKDYEAFHKEFEQLKQQNARLKRELEEQKLAATQV) form a coiled coil.

Belongs to the GpsB family. Forms polymers through the coiled coil domains. Interacts with PBP1, MreC and EzrA.

The protein resides in the cytoplasm. In terms of biological role, divisome component that associates with the complex late in its assembly, after the Z-ring is formed, and is dependent on DivIC and PBP2B for its recruitment to the divisome. Together with EzrA, is a key component of the system that regulates PBP1 localization during cell cycle progression. Its main role could be the removal of PBP1 from the cell pole after pole maturation is completed. Also contributes to the recruitment of PBP1 to the division complex. Not essential for septum formation. The sequence is that of Cell cycle protein GpsB from Bacillus anthracis (strain A0248).